The primary structure comprises 140 residues: MSKRGRGGSSGAKFRISLGLPVGAVINCADNTGAKNLYIISVKGIKGRLNRLPAAGVGDMVMATVKKGKPXLRKKVHPAVVIRQRKSYRRKDGVFLYFEDNAGVIVNNKGEMKGSAITGPVXKECADLWPXIASNAGSIA.

Serine 17 bears the Phosphoserine mark. Tyrosine 38 is subject to Phosphotyrosine.

The protein belongs to the universal ribosomal protein uL14 family. In terms of assembly, component of the large ribosomal subunit.

Its subcellular location is the cytoplasm. Component of the large ribosomal subunit. The ribosome is a large ribonucleoprotein complex responsible for the synthesis of proteins in the cell. In Canis lupus familiaris (Dog), this protein is Large ribosomal subunit protein uL14 (RPL23).